Here is a 1115-residue protein sequence, read N- to C-terminus: Disheveled-associated activator of morphogenesis 2 (1115 aa).

The GBD/FH3 domain maps to 40–416 (GPIPNPEELN…QIVLQDERGV (377 aa)). The stretch at 434 to 515 (MLINENEVKQ…ELVARHNESS (82 aa)) forms a coiled coil. Disordered regions lie at residues 510 to 605 (RHNE…SHPL) and 655 to 697 (QEGP…SATG). In terms of domain architecture, FH1 spans 518–694 (PVSSPPPPGG…TEKASRSMVS (177 aa)). Over residues 540 to 583 (LPPPPPPLPFDSCPPPPAPPLPPGGPPIPPGAPPCFSSGPPPSH) the composition is skewed to pro residues. Positions 595 to 1042 (KKRIPQPSHP…DERRARMEFM (448 aa)) constitute an FH2 domain. The DAD domain occupies 1065 to 1095 (EESGEFDDLVSALRSGEVFDKDLSKFKRNRK).

The protein belongs to the formin homology family. Interacts with DVL3. Interacts with INF2. As to expression, in early embryogenesis, expression is confined to embryonic ectoderm. Highly dynamic expression in later stages of gastrulation. In early somite stages, detected in posterior node and persists until 9-10 somites have developed when expression is concentrated in the chordoneural hinge. During organogenesis, expressed in the CNS, PNS, liver primordia, limb buds and genital tubercle.

Functionally, key regulator of the Wnt signaling pathway, which is required for various processes during development, such as dorsal patterning, determination of left/right symmetry or myelination in the central nervous system. Acts downstream of Wnt ligands and upstream of beta-catenin (CTNNB1). Required for canonical Wnt signaling pathway during patterning in the dorsal spinal cord by promoting the aggregation of Disheveled (Dvl) complexes, thereby clustering and formation of Wnt receptor signalosomes and potentiating Wnt activity. During dorsal patterning of the spinal cord, inhibits oligodendrocytes differentiation via interaction with PIP5K1A. Also regulates non-canonical Wnt signaling pathway. Acts downstream of PITX2 in the developing gut and is required for left/right asymmetry within dorsal mesentery: affects mesenchymal condensation by lengthening cadherin-based junctions through WNT5A and non-canonical Wnt signaling, inducing polarized condensation in the left dorsal mesentery necessary to initiate gut rotation. Together with DAAM1, required for myocardial maturation and sarcomere assembly. Is a regulator of actin nucleation and elongation, filopodia formation and podocyte migration. The sequence is that of Disheveled-associated activator of morphogenesis 2 from Mus musculus (Mouse).